Reading from the N-terminus, the 336-residue chain is Probable allantoicase (336 aa).

The protein belongs to the allantoicase family.

The catalysed reaction is allantoate + H2O = (S)-ureidoglycolate + urea. The protein operates within nitrogen metabolism; (S)-allantoin degradation; (S)-ureidoglycolate from allantoate (aminidohydrolase route): step 1/1. The chain is Probable allantoicase from Ralstonia nicotianae (strain ATCC BAA-1114 / GMI1000) (Ralstonia solanacearum).